A 312-amino-acid chain; its full sequence is Olfactory receptor 1D5 (312 aa).

Over 1–25 the chain is Extracellular; the sequence is MDGDNQSENSQFLLLGISESPEQQQ. Asparagine 5 carries an N-linked (GlcNAc...) asparagine glycan. The chain crosses the membrane as a helical span at residues 26–49; the sequence is ILFWMFLSMYLVTVLGNVLIILAI. Topologically, residues 50–57 are cytoplasmic; sequence SSDSHLHT. Residues 58–79 traverse the membrane as a helical segment; sequence PMYFFLANLSFTDLFFVTNTIP. Topologically, residues 80 to 100 are extracellular; sequence KMLVNFQSQNKAISYAGCLTQ. A disulfide bridge connects residues cysteine 97 and cysteine 189. The helical transmembrane segment at 101-120 threads the bilayer; that stretch reads LYFLVSLVTLDNLILAVMAY. Over 121–140 the chain is Cytoplasmic; the sequence is DRYVAICCPLHYVTAMSPGL. A helical transmembrane segment spans residues 141–158; sequence CVLLLSLCWGLSVLYGLL. Residues 159–196 lie on the Extracellular side of the membrane; sequence LTLLLTRVTFCGPREIHYLFCDMYILLRLACSNTHIIH. Residues 197 to 220 traverse the membrane as a helical segment; the sequence is TVLVATGCFIFLTPLGFMTTSYVC. The Cytoplasmic portion of the chain corresponds to 221–237; that stretch reads IVRTILQIPSASKKYKA. Residues 238-260 form a helical membrane-spanning segment; sequence FSTCASHLGVVSLFYGTLAMVYL. Residues 261–271 are Extracellular-facing; sequence QPLHTYSMKDS. The chain crosses the membrane as a helical span at residues 272–291; it reads VATVMYAVVTPMMNPFIYSL. Topologically, residues 292-312 are cytoplasmic; it reads RNKDMHGALGRVLRRLFQRPK.

The protein belongs to the G-protein coupled receptor 1 family.

The protein localises to the cell membrane. In terms of biological role, odorant receptor. The chain is Olfactory receptor 1D5 (OR1D5) from Pan paniscus (Pygmy chimpanzee).